Consider the following 176-residue polypeptide: ATP-dependent protease subunit HslV (176 aa).

The active site involves Thr-6. Positions 161, 164, and 167 each coordinate Na(+).

The protein belongs to the peptidase T1B family. HslV subfamily. A double ring-shaped homohexamer of HslV is capped on each side by a ring-shaped HslU homohexamer. The assembly of the HslU/HslV complex is dependent on binding of ATP.

It localises to the cytoplasm. It catalyses the reaction ATP-dependent cleavage of peptide bonds with broad specificity.. Allosterically activated by HslU binding. In terms of biological role, protease subunit of a proteasome-like degradation complex believed to be a general protein degrading machinery. The chain is ATP-dependent protease subunit HslV from Thermosipho africanus (strain TCF52B).